A 248-amino-acid chain; its full sequence is MSYDRAITVFSPDGHLFQVEYAQEAVKKGSTAVGVRGKDIVVLGVEKKSVAKLQDERTVRKICALDDNVCMAFAGLTADARIVINRARVECQSHRLTVEDPVTVEYITRYIASLKQRYTQSNGRRPFGISALIVGFDFDGTPRLYQTDPSGTYHAWKANAIGRGAKSVREFLEKNYTDDAIETDDLTIKLVIKALLEVVQSGGKNIELAVMRRDQPLKILNPEEIEKYVAEIEKEKEENEKKKQKKAS.

Ser-130 is a glycosylation site (O-linked (GlcNAc) serine). Position 153 is a phosphotyrosine; by ABL1 and ABL2 (Tyr-153). Lys-227 bears the N6-acetyllysine mark.

Belongs to the peptidase T1A family. The 26S proteasome consists of a 20S proteasome core and two 19S regulatory subunits. The 20S proteasome core is a barrel-shaped complex made of 28 subunits that are arranged in four stacked rings. The two outer rings are each formed by seven alpha subunits, and the two inner rings are formed by seven beta subunits. The proteolytic activity is exerted by three beta-subunits PSMB5, PSMB6 and PSMB7. PSMA7 interacts directly with the PSMG1-PSMG2 heterodimer which promotes 20S proteasome assembly. Interacts with HIF1A. Interacts with RAB7A. Interacts with PRKN. Interacts with ABL1 and ABL2. Interacts with EMAP2. Interacts with MAVS. In terms of processing, phosphorylation by ABL1 or ABL2 leads to an inhibition of proteasomal activity and cell cycle transition blocks. Detected in liver (at protein level).

It localises to the cytoplasm. Its subcellular location is the nucleus. Its function is as follows. Component of the 20S core proteasome complex involved in the proteolytic degradation of most intracellular proteins. This complex plays numerous essential roles within the cell by associating with different regulatory particles. Associated with two 19S regulatory particles, forms the 26S proteasome and thus participates in the ATP-dependent degradation of ubiquitinated proteins. The 26S proteasome plays a key role in the maintenance of protein homeostasis by removing misfolded or damaged proteins that could impair cellular functions, and by removing proteins whose functions are no longer required. Associated with the PA200 or PA28, the 20S proteasome mediates ubiquitin-independent protein degradation. This type of proteolysis is required in several pathways including spermatogenesis (20S-PA200 complex) or generation of a subset of MHC class I-presented antigenic peptides (20S-PA28 complex). The protein is Proteasome subunit alpha type-7 (Psma7) of Mus musculus (Mouse).